A 166-amino-acid chain; its full sequence is Interferon gamma (166 aa).

The N-terminal stretch at methionine 1–glycine 23 is a signal peptide. Glutamine 24 carries the post-translational modification Pyrrolidone carboxylic acid. 2 N-linked (GlcNAc...) asparagine glycosylation sites follow: asparagine 39 and asparagine 106.

This sequence belongs to the type II (or gamma) interferon family. As to quaternary structure, homodimer. Interacts with IFNGR1 (via extracellular domain); this interaction promotes IFNGR1 dimerization. In terms of tissue distribution, released primarily from activated T lymphocytes.

The protein localises to the secreted. In terms of biological role, type II interferon produced by immune cells such as T-cells and NK cells that plays crucial roles in antimicrobial, antiviral, and antitumor responses by activating effector immune cells and enhancing antigen presentation. Primarily signals through the JAK-STAT pathway after interaction with its receptor IFNGR1 to affect gene regulation. Upon IFNG binding, IFNGR1 intracellular domain opens out to allow association of downstream signaling components JAK2, JAK1 and STAT1, leading to STAT1 activation, nuclear translocation and transcription of IFNG-regulated genes. Many of the induced genes are transcription factors such as IRF1 that are able to further drive regulation of a next wave of transcription. Plays a role in class I antigen presentation pathway by inducing a replacement of catalytic proteasome subunits with immunoproteasome subunits. In turn, increases the quantity, quality, and repertoire of peptides for class I MHC loading. Increases the efficiency of peptide generation also by inducing the expression of activator PA28 that associates with the proteasome and alters its proteolytic cleavage preference. Up-regulates as well MHC II complexes on the cell surface by promoting expression of several key molecules such as cathepsins B/CTSB, H/CTSH, and L/CTSL. Participates in the regulation of hematopoietic stem cells during development and under homeostatic conditions by affecting their development, quiescence, and differentiation. This Bubalus bubalis (Domestic water buffalo) protein is Interferon gamma (IFNG).